A 149-amino-acid chain; its full sequence is Large ribosomal subunit protein bL9 (149 aa).

This sequence belongs to the bacterial ribosomal protein bL9 family.

Binds to the 23S rRNA. The polypeptide is Large ribosomal subunit protein bL9 (Geobacillus sp. (strain WCH70)).